Here is a 541-residue protein sequence, read N- to C-terminus: Reticulophagy regulator 2 (541 aa).

Helical transmembrane passes span 75-91, 99-115, and 199-219; these read LHSLVTAATLNGLFWLL, FFLLSISLLTYFLLDLW, and VPGIMISYIVLLSILLWPLVV. The segment at 249 to 282 is disordered; that stretch reads LHHKHDKRKRQGKNAPPAGDEPLAETESESEAEL. A compositionally biased stretch (basic residues) spans 250–260; that stretch reads HHKHDKRKRQG. A compositionally biased stretch (acidic residues) spans 270–280; the sequence is PLAETESESEA. The residue at position 274 (T274) is a Phosphothreonine. S276, S278, S286, and S306 each carry phosphoserine. T329 carries the post-translational modification Phosphothreonine. 3 disordered regions span residues 331–389, 403–440, and 459–481; these read VSED…ADKE, THFNGAGSPQEGVKCPPGGPVETLSPEAVSGDLMAPSS, and PSVLPSLPQDSPQALTAPEEEEA. Residues S332, S339, and S342 each carry the phosphoserine modification. Residues 459-475 are compositionally biased toward low complexity; the sequence is PSVLPSLPQDSPQALTA. Positions 485–490 match the LIR motif motif; it reads EDFELL. A disordered region spans residues 496-541; sequence EQLNAELGLGPEMPPKPPDVLPPPPLGPDSHSLVQSDQEAHAVVEP. Over residues 507 to 522 the composition is skewed to pro residues; the sequence is EMPPKPPDVLPPPPLG.

Belongs to the RETREG family. As to quaternary structure, interacts with ATG8 family modifier proteins MAP1LC3A, MAP1LC3B, GABARAP, GABARAPL1 and GABARAPL2. Interacts with CANX.

The protein localises to the endoplasmic reticulum membrane. Functionally, endoplasmic reticulum (ER)-anchored autophagy regulator which exists in an inactive state under basal conditions but is activated following cellular stress. When activated, induces ER fragmentation and mediates ER delivery into lysosomes through sequestration into autophagosomes via interaction with ATG8 family proteins. Required for collagen quality control in a LIR motif-independent manner. The chain is Reticulophagy regulator 2 (Retreg2) from Rattus norvegicus (Rat).